An 89-amino-acid chain; its full sequence is Small ribosomal subunit protein uS19 (89 aa).

Belongs to the universal ribosomal protein uS19 family.

Functionally, protein S19 forms a complex with S13 that binds strongly to the 16S ribosomal RNA. This is Small ribosomal subunit protein uS19 from Bacteroides thetaiotaomicron (strain ATCC 29148 / DSM 2079 / JCM 5827 / CCUG 10774 / NCTC 10582 / VPI-5482 / E50).